The chain runs to 309 residues: Ubiquitin-conjugating enzyme E2 32 (309 aa).

The region spanning 11-166 is the UBC core domain; the sequence is PAVKRILQEV…ERQKIIDEIH (156 aa). The active-site Glycyl thioester intermediate is the cysteine 93. Residues 275-295 traverse the membrane as a helical segment; that stretch reads FTWAAVGLTIAIMVLLLKKFI.

Belongs to the ubiquitin-conjugating enzyme family.

The protein localises to the membrane. The catalysed reaction is S-ubiquitinyl-[E1 ubiquitin-activating enzyme]-L-cysteine + [E2 ubiquitin-conjugating enzyme]-L-cysteine = [E1 ubiquitin-activating enzyme]-L-cysteine + S-ubiquitinyl-[E2 ubiquitin-conjugating enzyme]-L-cysteine.. Its pathway is protein modification; protein ubiquitination. Functionally, accepts the ubiquitin from the E1 complex and catalyzes its covalent attachment to other proteins. The protein is Ubiquitin-conjugating enzyme E2 32 (UBC32) of Arabidopsis thaliana (Mouse-ear cress).